The chain runs to 306 residues: ATP-dependent (S)-NAD(P)H-hydrate dehydratase (306 aa).

The YjeF C-terminal domain maps to 4–300; the sequence is LIDLFKPMIP…NQISNGFEDL (297 aa). Residues glycine 104 and 157 to 163 each bind (6S)-NADPHX; that span reads NFVEFKS. Residues 197-201 and 216-225 each bind ATP; these read KGKED and GMPRRCGGQG. (6S)-NADPHX is bound at residue aspartate 226.

This sequence belongs to the NnrD/CARKD family. Mg(2+) is required as a cofactor.

It carries out the reaction (6S)-NADHX + ATP = ADP + phosphate + NADH + H(+). The enzyme catalyses (6S)-NADPHX + ATP = ADP + phosphate + NADPH + H(+). In terms of biological role, catalyzes the dehydration of the S-form of NAD(P)HX at the expense of ATP, which is converted to ADP. Together with NAD(P)HX epimerase, which catalyzes the epimerization of the S- and R-forms, the enzyme allows the repair of both epimers of NAD(P)HX, a damaged form of NAD(P)H that is a result of enzymatic or heat-dependent hydration. The protein is ATP-dependent (S)-NAD(P)H-hydrate dehydratase of Dictyostelium discoideum (Social amoeba).